The following is a 185-amino-acid chain: NOP protein chaperone 1 (185 aa).

Residues Ser34, Ser66, and Ser177 each carry the phosphoserine modification. The tract at residues 121–185 is disordered; sequence SRSDSKEEDS…DSPASKKKKQ (65 aa).

In terms of assembly, interacts with NOP58, RUVBL1 and RUVBL2; the interactions are direct and NOPCHAP1 bridges the association of NOP58 with RUVBL1:RUVBL2 even in absence of snoRNAs. The interactions with RUVBL1 and RUVBL2 are disrupted upon ATP binding.

It localises to the nucleus. Client-loading PAQosome/R2TP complex cofactor that selects NOP58 to promote box C/D small nucleolar ribonucleoprotein (snoRNP) assembly. Acts as a bridge between NOP58 and the R2TP complex via RUVBL1:RUVBL2. The polypeptide is NOP protein chaperone 1 (Mus musculus (Mouse)).